We begin with the raw amino-acid sequence, 349 residues long: uncharacterized protein (349 aa).

The signal sequence occupies residues 1 to 25 (MNKYIKQGAPILGILLAVMFGGREG).

Belongs to the bacterial solute-binding protein 1 family. WtpA subfamily.

This is an uncharacterized protein from Methanococcus aeolicus (strain ATCC BAA-1280 / DSM 17508 / OCM 812 / Nankai-3).